Reading from the N-terminus, the 199-residue chain is FMN-dependent NADH:quinone oxidoreductase 2 (199 aa).

FMN contacts are provided by residues S10, S16–S18, and M96–F99.

This sequence belongs to the azoreductase type 1 family. In terms of assembly, homodimer. The cofactor is FMN.

The catalysed reaction is 2 a quinone + NADH + H(+) = 2 a 1,4-benzosemiquinone + NAD(+). It carries out the reaction N,N-dimethyl-1,4-phenylenediamine + anthranilate + 2 NAD(+) = 2-(4-dimethylaminophenyl)diazenylbenzoate + 2 NADH + 2 H(+). In terms of biological role, quinone reductase that provides resistance to thiol-specific stress caused by electrophilic quinones. Also exhibits azoreductase activity. Catalyzes the reductive cleavage of the azo bond in aromatic azo compounds to the corresponding amines. This chain is FMN-dependent NADH:quinone oxidoreductase 2, found in Pseudomonas fluorescens (strain Pf0-1).